We begin with the raw amino-acid sequence, 147 residues long: UPF0306 protein YhbP (147 aa).

It belongs to the UPF0306 family.

The protein is UPF0306 protein YhbP of Salmonella paratyphi A (strain AKU_12601).